Here is a 607-residue protein sequence, read N- to C-terminus: MKPVSCVGLLVLLVGVLVTVKGSILFQSPKVLIVSLIRNKEHTLPYFFSYLEDQEYPKDRISLWFRSDHNEDRSIDIIKAWLKRVTKKYHSVDFGYRSDAAKRYDEKSSTHWSEDRFADVIRLKQEALDKGRKMWADFVLFLDADVLLTNPNTIAKLVSLNLPIVAPMLLSDGLYSNFWCGMTADYYYHRTDEYKEILNYEKTGEFPVPMVHSAVMVNINVQQSLNLSFDKRRLPPGHYTGPVDDIIIFAMSANYSSIPMYISNSASYGYILVPLEQGDPLEKDLEQLTNTKVYIINEHGAINLKEDLKHFVPKVPKDKMGVSHIYMINLERRPERRNKMFNNFDELGLDVEFFPAVDGRQLSDDKLRDIGVKFLPGYADPYHKRPMTMGEIGCFLSHYYIWEKMVAMNQEEVLVLEDDIRFEPYFKRRVAQVLDDARRIGGWDLIYFGRKRLQEDDEKWVVGSETLVVAGYSYWTLGYLISLQGAKKLLEEKPLEKLVPVDEYIPIMFNNHPNESWVNHFKNRNLVAWSAAPLLLYPTHYTGDDGYISDTEDSARIDNFNKVLNDTSDSSAEKKGDKEQLSSKTLMDSTISRDEHELSVANRKSEL.

A signal peptide spans 1–22 (MKPVSCVGLLVLLVGVLVTVKG). N-linked (GlcNAc...) asparagine glycans are attached at residues asparagine 226, asparagine 254, asparagine 514, and asparagine 565. Residues 566–607 (DTSDSSAEKKGDKEQLSSKTLMDSTISRDEHELSVANRKSEL) form a disordered region. Composition is skewed to basic and acidic residues over residues 571-581 (SAEKKGDKEQL) and 591-607 (ISRD…KSEL). Residues 604-607 (KSEL) carry the Prevents secretion from ER motif.

It belongs to the glycosyltransferase 25 family.

It localises to the endoplasmic reticulum lumen. This chain is Glycosyltransferase 25 family member, found in Aedes aegypti (Yellowfever mosquito).